Reading from the N-terminus, the 327-residue chain is Phenylalanine--tRNA ligase alpha subunit (327 aa).

Glu-252 provides a ligand contact to Mg(2+).

Belongs to the class-II aminoacyl-tRNA synthetase family. Phe-tRNA synthetase alpha subunit type 1 subfamily. In terms of assembly, tetramer of two alpha and two beta subunits. The cofactor is Mg(2+).

It is found in the cytoplasm. The catalysed reaction is tRNA(Phe) + L-phenylalanine + ATP = L-phenylalanyl-tRNA(Phe) + AMP + diphosphate + H(+). The protein is Phenylalanine--tRNA ligase alpha subunit of Vibrio cholerae serotype O1 (strain ATCC 39541 / Classical Ogawa 395 / O395).